The sequence spans 228 residues: MATNEPEHEHRDEEEAGANEDEDTGAQVAPIVRLEEVAVTTGEEDEDAVLDLKSKLYRFDKDANQWKERGAGTVKFLKHKNTGKIRLVMRQSKTLKICANHFVKSGMSVQEHVGNEKSCVWHARDFADGELKDELFCIRFASIENCKTFMQKFKEVAESEEEKEESKDAADTAGLLEKLTVEETKTEEKTEAKAVETAKTEVKAEEKKESEAEKSGEAKKTEESGPST.

Basic and acidic residues predominate over residues 1 to 13 (MATNEPEHEHRDE). Disordered regions lie at residues 1-30 (MATN…QVAP) and 159-228 (SEEE…GPST). The segment covering 14-24 (EEAGANEDEDT) has biased composition (acidic residues). A RanBD1 domain is found at 27-162 (QVAPIVRLEE…FKEVAESEEE (136 aa)). Positions 179–228 (LTVEETKTEEKTEAKAVETAKTEVKAEEKKESEAEKSGEAKKTEESGPST) are enriched in basic and acidic residues.

Interacts with the GTP-bound form of RAN1, RAN2 and RAN3. In terms of tissue distribution, ubiquitous. Preferentially expressed in root tips and gynoecium.

It is found in the nucleus. The protein resides in the nuclear pore complex. The chain is Ran-binding protein 1 homolog a (RANBP1A) from Arabidopsis thaliana (Mouse-ear cress).